Consider the following 152-residue polypeptide: Large ribosomal subunit protein bL9 (152 aa).

The protein belongs to the bacterial ribosomal protein bL9 family.

Its function is as follows. Binds to the 23S rRNA. The protein is Large ribosomal subunit protein bL9 of Thermosynechococcus vestitus (strain NIES-2133 / IAM M-273 / BP-1).